The following is a 694-amino-acid chain: MTFETISVTLEEGKTLVFETGKIARQANGAVLARMQETWVFSSVCAANLEEAVDFLPLRVDYQEKFSSIGKTLGGFIKREGRPTEREILTSRLIDRSMRPSLPNRLMQDIQILSYVWSYDGVTLPDPIAICGVSAALAISDIPQTSIVAGVRVGFVNNRWVVNPTKAEMDVSRMELVLAGTENAILMIEGHCDFFTEEQVIEAIEFGHKHIVTICKALKDWQKHIGKEKNTSGIVSLPEEVQSAVNTFVEGKFVDLLKIKEKKAFEAASKQLENEVIEQLQEENEVFTAFNIKIAFKQAKSNFIRGLIREQGLRSDGRSVTTIRPISIDTSFLPRTHGSCLFTRGETQTMAVCTLGSEAMAQRYEDLNGEGLAKFYLQYFFPPFSVGEVGRIGSPGRREIGHGKLAEKALSHTLPDPMKFPYTIRIESNITESNGSSSMASVCGGCLALMDAGVPIKTPIAGIAMGLILEDDHVTILSDISGLEDHLGDMDFKVAGNTEGITAFQMDIKVEGITPDIMRAALAQAKEGRQDILETMKQALAAPKTDLSQYAPRIETMQIKPNKIATVIGPGGKQIRQIIEEAGVQIDINDSGLVSISASSPQAIEKAKSIIEGLVGEVEVGKIYEGRVTSVVPFGAFVEILPGKEGLCHISEFSKQRIDNVGDFVKQGDTLTVKLLSINEKGQYKLSHKATLSE.

Mg(2+) is bound by residues D485 and D491. A KH domain is found at 552-611; it reads PRIETMQIKPNKIATVIGPGGKQIRQIIEEAGVQIDINDSGLVSISASSPQAIEKAKSII. The 69-residue stretch at 621–689 folds into the S1 motif domain; that stretch reads GKIYEGRVTS…EKGQYKLSHK (69 aa).

It belongs to the polyribonucleotide nucleotidyltransferase family. Mg(2+) is required as a cofactor.

It is found in the cytoplasm. It carries out the reaction RNA(n+1) + phosphate = RNA(n) + a ribonucleoside 5'-diphosphate. Its function is as follows. Involved in mRNA degradation. Catalyzes the phosphorolysis of single-stranded polyribonucleotides processively in the 3'- to 5'-direction. This chain is Polyribonucleotide nucleotidyltransferase, found in Chlamydia abortus (strain DSM 27085 / S26/3) (Chlamydophila abortus).